We begin with the raw amino-acid sequence, 568 residues long: Urease subunit alpha (568 aa).

The Urease domain maps to 130–568 (GGIDTHIHFI…LPMAQRYFLF (439 aa)). Residues histidine 135, histidine 137, and lysine 218 each coordinate Ni(2+). Lysine 218 is modified (N6-carboxylysine). Histidine 220 is a binding site for substrate. Ni(2+) is bound by residues histidine 247 and histidine 273. Histidine 321 (proton donor) is an active-site residue. Aspartate 361 provides a ligand contact to Ni(2+).

This sequence belongs to the metallo-dependent hydrolases superfamily. Urease alpha subunit family. As to quaternary structure, heterotrimer of UreA (gamma), UreB (beta) and UreC (alpha) subunits. Three heterotrimers associate to form the active enzyme. Ni cation is required as a cofactor. Post-translationally, carboxylation allows a single lysine to coordinate two nickel ions.

The protein resides in the cytoplasm. It catalyses the reaction urea + 2 H2O + H(+) = hydrogencarbonate + 2 NH4(+). It participates in nitrogen metabolism; urea degradation; CO(2) and NH(3) from urea (urease route): step 1/1. This chain is Urease subunit alpha, found in Burkholderia pseudomallei (strain 1106a).